Consider the following 445-residue polypeptide: Response regulator protein PilR (445 aa).

One can recognise a Response regulatory domain in the interval 5 to 119 (KALIVDDEPD…RLRELVATAL (115 aa)). 4-aspartylphosphate is present on residues Asp-11 and Asp-54. The 230-residue stretch at 135–364 (LLGESPPMRA…LENMLERAYT (230 aa)) folds into the Sigma-54 factor interaction domain. Residues 163-170 (GESGSGKE) and 226-235 (ASGGTLFLDE) contribute to the ATP site. A DNA-binding region (H-T-H motif) is located at residues 418-437 (RWNRTAAAQRLGLTFRSMRY).

Phosphorylated by PilS.

The protein resides in the cytoplasm. Its function is as follows. Member of the two-component regulatory system PilS/PilR that regulates the expression of multiple genes including the type IV pilus (T4P) major subunit PilA. Thereby, plays a major role in the regulation of multiple motility pathways. Upon appropriate environmental signals, the histidine kinase PilS transfers the phosphoryl group onto PilR. In turn, PilR functions as a transcriptional activator by direct binding to a cis-acting sequence upstream of the pilin gene promoter leading to its activation. This chain is Response regulator protein PilR (pilR), found in Pseudomonas aeruginosa (strain ATCC 15692 / DSM 22644 / CIP 104116 / JCM 14847 / LMG 12228 / 1C / PRS 101 / PAO1).